The chain runs to 254 residues: 2-dehydro-3-deoxy-D-gluconate 5-dehydrogenase (254 aa).

16–40 is a binding site for NAD(+); sequence LVTGPGTGIGQGIAKALAGAGADII. Position 146 (S146) interacts with substrate. Y159 serves as the catalytic Proton acceptor.

The protein belongs to the short-chain dehydrogenases/reductases (SDR) family.

It catalyses the reaction 2-dehydro-3-deoxy-D-gluconate + NAD(+) = 3-deoxy-D-glycero-2,5-hexodiulosonate + NADH + H(+). Its pathway is glycan metabolism; pectin degradation; 2-dehydro-3-deoxy-D-gluconate from pectin: step 5/5. Functionally, catalyzes the reduction of 2,5-diketo-3-deoxygluconate (DKII or 4,6-dihydroxy-2,5-dioxohexanoate) into 2-keto-3-deoxygluconate (KDG or 2-dehydro-3-deoxygluconate) with a concomitant oxidation of NADH. The sequence is that of 2-dehydro-3-deoxy-D-gluconate 5-dehydrogenase (kduD) from Bacillus subtilis (strain 168).